The chain runs to 270 residues: MSVEQSLLGKETQYPTSYQPDVLFPIARAQSREKYAHIQGITQGKDWWHVFEISWLNAHGIPQVAIGRITLPASSPNLIESKSLKLYFNSLNFTQFDSTQSFIETVEKDLSAAAGAKVELTLFQVDDLETSKPQGICIDDLMPERLEQHPDATLLKLDESGEEIEVELYSHLLRSNCPVTSQPDWGTVFIRFKGKKPCYRSLLAYIISYRQHNGFHEQCVEQIFADIWQNLQPEKLMVYATYTRRGGLDINPCRVSDLTWMPKPIRLARQ.

79 to 81 is a substrate binding site; it reads IES. 81-82 provides a ligand contact to NADPH; the sequence is SK. The Thioimide intermediate role is filled by Cys177. Asp184 functions as the Proton donor in the catalytic mechanism. 216-217 is a substrate binding site; sequence HE. Residue 245-246 participates in NADPH binding; the sequence is RG.

Belongs to the GTP cyclohydrolase I family. QueF type 2 subfamily. In terms of assembly, homodimer.

The protein localises to the cytoplasm. It catalyses the reaction 7-aminomethyl-7-carbaguanine + 2 NADP(+) = 7-cyano-7-deazaguanine + 2 NADPH + 3 H(+). It participates in tRNA modification; tRNA-queuosine biosynthesis. Functionally, catalyzes the NADPH-dependent reduction of 7-cyano-7-deazaguanine (preQ0) to 7-aminomethyl-7-deazaguanine (preQ1). The chain is NADPH-dependent 7-cyano-7-deazaguanine reductase from Acinetobacter baumannii (strain SDF).